A 194-amino-acid chain; its full sequence is Cupin-domain-containing oxidoreductase virC (194 aa).

Residues 106–175 enclose the Cupin type-2 domain; sequence IDFAPNVISP…GTLPGRMMWV (70 aa).

Belongs to the virC family.

Its pathway is secondary metabolite biosynthesis. Functionally, cupin-domain-containing oxidoreductase; part of the gene cluster that mediates the biosynthesis of virensols and trichoxide, fungal natural products that contain or are derived from a salicylaldehyde core. The pathway begins with the synthesis of the reduced chain in virensol C by the highly reducing polyketide synthase virA via condensation of one acetate and 8 malonate units. VirA has interesting programming rules since the first 2 ketides are fully reduced, the 3 following ketides undergo beta-dehydration, and the last 3 ketides are only reduced to beta-hydroxys to yield the trihydroxy portion. The production of aldehyde virensol C by virA alone is surprising, since virA does not contain a reductase (R) domain that is typically associated with reductive product release in HRPKS. The cupin-domain enzyme virC is involved in enhancing virA product turnover. The short-chain dehydrogenase virB then oxidizes the C-7 alcohol of virensol C to a ketone, yielding virensol D. Virensol D is further transformed to salicylaldehyde 5-deoxyaurocitrin by the short-chain dehydrogenase virD. VirD catalyzes the dehydrogenation of C-3 to form the beta-ketone aldehyde, which is followed by the generation of the nucleophilic C-2 that is required for the intramolecular aldol condensation between C-2 and C-7, itself followed by dehydration and aromatization which leads to salicylaldehyde 5-deoxyaurocitrin. While the dehydrogenation of virensol D is definitely catalyzed by virD, the aldol condensation and dehydration may be uncatalyzed or assisted by virD. The short chain dehydrogenase virG then converts salicylaldehyde 5-deoxyaurocitrin into virensol B which is further hydroxylated by the cytochrome P450 monooxygenase virE to yield the hydroquinone virensol A. VirI then may oxidize virensol A to form the quinone, while virH performs the epoxidation. Finally, the two remaining short-chain dehydrogenases, virK and virL, are probably responsible for reducing the ketones to the corresponding alcohols to furnish the epoxycyclohexanol structure in trichoxide. The polypeptide is Cupin-domain-containing oxidoreductase virC (Hypocrea virens (strain Gv29-8 / FGSC 10586) (Gliocladium virens)).